The following is a 931-amino-acid chain: 3'-5' exonuclease DinG (931 aa).

The region spanning 7-162 is the Exonuclease domain; sequence VVIDVETTGN…DSDAEVTGLI (156 aa). Positions 250 to 510 constitute a Helicase ATP-binding domain; sequence LSELMPGYEK…KKMRQLFQRN (261 aa). 284–291 serves as a coordination point for ATP; sequence APPGIGKT. The short motif at 462–465 is the DEAH box element; that stretch reads DEAH. The Helicase C-terminal domain occupies 741–897; it reads DTARYIELMA…TIIILDRRIK (157 aa).

The protein belongs to the helicase family. DinG subfamily. Type 2 sub-subfamily.

Its subcellular location is the cytoplasm. 3'-5' exonuclease. This chain is 3'-5' exonuclease DinG, found in Bacillus subtilis (strain 168).